Reading from the N-terminus, the 365-residue chain is Ribosomal RNA large subunit methyltransferase M (365 aa).

S-adenosyl-L-methionine-binding positions include Ser-188, 221-224 (CPGG), Asp-240, Asp-260, and Asp-277. The active-site Proton acceptor is Lys-306.

It belongs to the class I-like SAM-binding methyltransferase superfamily. RNA methyltransferase RlmE family. RlmM subfamily. As to quaternary structure, monomer.

The protein resides in the cytoplasm. It catalyses the reaction cytidine(2498) in 23S rRNA + S-adenosyl-L-methionine = 2'-O-methylcytidine(2498) in 23S rRNA + S-adenosyl-L-homocysteine + H(+). Functionally, catalyzes the 2'-O-methylation at nucleotide C2498 in 23S rRNA. In Proteus mirabilis (strain HI4320), this protein is Ribosomal RNA large subunit methyltransferase M.